Reading from the N-terminus, the 272-residue chain is Putative hydro-lyase RPD_1846 (272 aa).

Belongs to the D-glutamate cyclase family.

The chain is Putative hydro-lyase RPD_1846 from Rhodopseudomonas palustris (strain BisB5).